A 239-amino-acid polypeptide reads, in one-letter code: MALYRDEAVVLRTAKLGEADRIITLLTRDHGKVRAVAKGVRRTKSRFGARLEPFMRVDLLLGEGRTFDSVRQAESISAYAGGITGDYATYTAASAMCETAADLLPAEHEPAAAQYRLLIAALGALSRHLHDPQAIALSYILRAMSLAGWTIRLDSCVVCGSQDVEFFSASAGGAMCPNDHTPDAVRVPVHVFDQLRALEQGDWPQLDMLQTPDPRCENIVREWAQYYLERPIRSLRLLD.

This sequence belongs to the RecO family.

Functionally, involved in DNA repair and RecF pathway recombination. In Bifidobacterium animalis subsp. lactis (strain AD011), this protein is DNA repair protein RecO.